Consider the following 119-residue polypeptide: Ribonuclease P protein component (119 aa).

Belongs to the RnpA family. As to quaternary structure, consists of a catalytic RNA component (M1 or rnpB) and a protein subunit.

The enzyme catalyses Endonucleolytic cleavage of RNA, removing 5'-extranucleotides from tRNA precursor.. Functionally, RNaseP catalyzes the removal of the 5'-leader sequence from pre-tRNA to produce the mature 5'-terminus. It can also cleave other RNA substrates such as 4.5S RNA. The protein component plays an auxiliary but essential role in vivo by binding to the 5'-leader sequence and broadening the substrate specificity of the ribozyme. The sequence is that of Ribonuclease P protein component from Coprothermobacter proteolyticus (strain ATCC 35245 / DSM 5265 / OCM 4 / BT).